Here is a 344-residue protein sequence, read N- to C-terminus: GTPase Obg (344 aa).

An Obg domain is found at 1–159 (MKFLDEAKVY…MWLILRLKLI (159 aa)). The region spanning 160 to 327 (ADAGLVGLPN…ALRAIQAQLD (168 aa)) is the OBG-type G domain. GTP is bound by residues 166 to 173 (GLPNAGKS), 191 to 195 (FTTLH), 212 to 215 (DIPG), 279 to 282 (SKAD), and 308 to 310 (SAA). Positions 173 and 193 each coordinate Mg(2+).

The protein belongs to the TRAFAC class OBG-HflX-like GTPase superfamily. OBG GTPase family. Monomer. Mg(2+) is required as a cofactor.

The protein localises to the cytoplasm. Functionally, an essential GTPase which binds GTP, GDP and possibly (p)ppGpp with moderate affinity, with high nucleotide exchange rates and a fairly low GTP hydrolysis rate. Plays a role in control of the cell cycle, stress response, ribosome biogenesis and in those bacteria that undergo differentiation, in morphogenesis control. This Methylorubrum extorquens (strain CM4 / NCIMB 13688) (Methylobacterium extorquens) protein is GTPase Obg.